A 403-amino-acid polypeptide reads, in one-letter code: Probable tRNA sulfurtransferase (403 aa).

Positions 60–165 (QLAEERLKPI…KEGVFLSCRT (106 aa)) constitute a THUMP domain. ATP contacts are provided by residues 183–184 (ML), 208–209 (HF), R265, G287, and Q296.

The protein belongs to the ThiI family.

The protein resides in the cytoplasm. It carries out the reaction [ThiI sulfur-carrier protein]-S-sulfanyl-L-cysteine + a uridine in tRNA + 2 reduced [2Fe-2S]-[ferredoxin] + ATP + H(+) = [ThiI sulfur-carrier protein]-L-cysteine + a 4-thiouridine in tRNA + 2 oxidized [2Fe-2S]-[ferredoxin] + AMP + diphosphate. The enzyme catalyses [ThiS sulfur-carrier protein]-C-terminal Gly-Gly-AMP + S-sulfanyl-L-cysteinyl-[cysteine desulfurase] + AH2 = [ThiS sulfur-carrier protein]-C-terminal-Gly-aminoethanethioate + L-cysteinyl-[cysteine desulfurase] + A + AMP + 2 H(+). It participates in cofactor biosynthesis; thiamine diphosphate biosynthesis. In terms of biological role, catalyzes the ATP-dependent transfer of a sulfur to tRNA to produce 4-thiouridine in position 8 of tRNAs, which functions as a near-UV photosensor. Also catalyzes the transfer of sulfur to the sulfur carrier protein ThiS, forming ThiS-thiocarboxylate. This is a step in the synthesis of thiazole, in the thiamine biosynthesis pathway. The sulfur is donated as persulfide by IscS. The polypeptide is Probable tRNA sulfurtransferase (Listeria innocua serovar 6a (strain ATCC BAA-680 / CLIP 11262)).